Here is a 266-residue protein sequence, read N- to C-terminus: Sesquipedalian-1 (266 aa).

Residues 17 to 113 (PVDNAGFLYK…WVKALSRASF (97 aa)) enclose the PH domain. The tract at residues 165–184 (QPSVAPQRPPPLPPRRRASA) is disordered. Ser183 is subject to Phosphoserine. The short motif at 191–203 (SFAQLHARYGLEV) is the F&amp;H element.

The protein belongs to the sesquipedalian family. Forms homodimers and heterodimers with PHETA2. Interacts with OCRL and INPP5B. Interaction with OCRL may be important for endosomal morphology and function.

Its subcellular location is the early endosome. It localises to the recycling endosome. It is found in the golgi apparatus. The protein resides in the trans-Golgi network. The protein localises to the cytoplasmic vesicle. Its subcellular location is the clathrin-coated vesicle. Its function is as follows. Plays a role in endocytic trafficking. Required for receptor recycling from endosomes, both to the trans-Golgi network and the plasma membrane. This is Sesquipedalian-1 from Mus musculus (Mouse).